A 334-amino-acid polypeptide reads, in one-letter code: Protein CUP-SHAPED COTYLEDON 3 (334 aa).

The NAC domain maps to 22–171; it reads LPPGFRFHPT…EWVICRVFNK (150 aa). A DNA-binding region spans residues 121 to 177; it reads VGMKKTLVFYKGRAPRGLKTKWVMHEYRLENDHSHRHTCKEEWVICRVFNKTGDRKN.

In a general manner, present at the boundaries between mersitems and araising primordia.

The protein localises to the nucleus. Transcription activator. Involved in molecular mechanisms regulating shoot apical meristem (SAM) formation during embryogenesis and organ separation. Required for axillary meristem initiation and separation of the meristem from the main stem. May act as an inhibitor of cell division. The polypeptide is Protein CUP-SHAPED COTYLEDON 3 (NAC031) (Arabidopsis thaliana (Mouse-ear cress)).